We begin with the raw amino-acid sequence, 86 residues long: RNA-binding protein Hfq (86 aa).

Residues 10–71 enclose the Sm domain; that stretch reads DLFLNNARKE…VSTIQPGKYI (62 aa).

This sequence belongs to the Hfq family. Homohexamer.

RNA chaperone that binds small regulatory RNA (sRNAs) and mRNAs to facilitate mRNA translational regulation in response to envelope stress, environmental stress and changes in metabolite concentrations. Also binds with high specificity to tRNAs. The sequence is that of RNA-binding protein Hfq from Clostridioides difficile (strain 630) (Peptoclostridium difficile).